The following is a 685-amino-acid chain: Multicopper oxidase VdtB (685 aa).

An N-terminal signal peptide occupies residues 1–17; that stretch reads MPAYLLLLACNVLLVLG. Plastocyanin-like domains follow at residues 26 to 139 and 168 to 368; these read LTWE…IRRK and IMML…RYKN. N71 carries N-linked (GlcNAc...) asparagine glycosylation. Residues H75, H77, H119, and H121 each coordinate Cu cation. Residues N178, N229, N253, N432, and N475 are each glycosylated (N-linked (GlcNAc...) asparagine). One can recognise a Plastocyanin-like 3 domain in the interval 466–585; that stretch reads DDDLIIRTQN…DNGMAMAILD (120 aa). H500 contacts Cu cation. Residue N517 is glycosylated (N-linked (GlcNAc...) asparagine). A helical membrane pass occupies residues 627 to 647; the sequence is SLVWAGGAAVVLLSLFIGGLW.

This sequence belongs to the multicopper oxidase family.

Its subcellular location is the membrane. The enzyme catalyses 4 semiviriditoxin + O2 = 2 (M)-viriditoxin + 2 H2O. It functions in the pathway secondary metabolite biosynthesis. Its function is as follows. Multicopper oxidase; part of the gene cluster that mediates the biosynthesis of viriditoxin, one of the 'classical' secondary metabolites produced by fungi and that has antibacterial activity. The first step is performed by the polyketide synthase VdtA which condenses one acetyl-CoA and 6 malonyl-CoA units to form the heptaketide monomer backbone of viriditoxin. The product of VdtA is then O-methylated on C7 by the O-methyltransferase VdtC. The O-methyl group is important for the stereoselective coupling of the monomers at the final step of viriditoxin biosynthesis. The short-chain dehydrogenase/reductase VdtF then acts as a stereospecific reductase converting the pyrone to dihydropyrone via the reduction of the C3-C4 double bond. The FAD-binding monooxygenase VdtE then converts the ketone group into a methyl-ester group to yield semi-viriditoxin. Finally, the laccase VdtB is involved in dimerization of 2 semi-viriditoxin molecules to yield the final viriditoxin. VdtB is responsible for the regioselective 6,6'-coupling of semi-viriditoxin, which yields (M)-viriditoxin and (P)-viriditoxin at a ratio of 1:2. The non-catalytic carboxylesterase-like protein VdtD affects the stereochemistical outcome of the coupling. The highly reducing polyketide synthase VdtX is not involved in viriditoxin synthesis, but might possibly play a role in the production of additional metabolites not identified yet. In Byssochlamys spectabilis (Paecilomyces variotii), this protein is Multicopper oxidase VdtB.